The sequence spans 251 residues: uncharacterized protein (251 aa).

Residues 1-25 form the signal peptide; it reads MRKKKFLSRFSFSSLFLLCGTLLSA. C26 is lipidated: N-palmitoyl cysteine. The S-diacylglycerol cysteine moiety is linked to residue C26.

It belongs to the MG439/MG440 family.

Its subcellular location is the cell membrane. This is an uncharacterized protein from Mycoplasma pneumoniae (strain ATCC 29342 / M129 / Subtype 1) (Mycoplasmoides pneumoniae).